The sequence spans 312 residues: Bifunctional pinoresinol-lariciresinol reductase (312 aa).

Residues 10 to 16 (GGTGYLG), R35, and K44 contribute to the NADP(+) site. K139 (proton acceptor) is an active-site residue. Residue R143 coordinates NADP(+). H271 contributes to the substrate binding site.

It belongs to the NmrA-type oxidoreductase family. Isoflavone reductase subfamily. In terms of assembly, dimer. In terms of tissue distribution, expressed in young stems, young roots and petioles. In stems, expressed in radial parenchyma cells and in the cambial cells of developing secondary xylem.

The enzyme catalyses (+)-lariciresinol + NADP(+) = (+)-pinoresinol + NADPH + H(+). The catalysed reaction is (-)-secoisolariciresinol + NADP(+) = (+)-lariciresinol + NADPH + H(+). In terms of biological role, reductase involved in lignan biosynthesis. Catalyzes the enantioselective sequential conversion of (+)-pinoresinol into (+)-lariciresinol and of (+)-lariciresinol into (-)-secoisolariciresinol. Abstracts the 4R-hydride from the NADPH cofactor during catalysis. The chain is Bifunctional pinoresinol-lariciresinol reductase (PLR_Fi1) from Forsythia intermedia (Border forsythia).